The following is a 284-amino-acid chain: MEDEKFPISYVHGKFLVFDVQAVEVFRKNYHILGTLVGTLPQLPQQNVFLGLPMELSKEEAFYLIEKGISYIVDDTKVHKQLLENTTKDDVKQCLKKRQSLAYDQMIAAKKKENEKKIEIMKKLGRTLPLDPLNYDEHDSFDLSWIPVDTVTTRIAEKSSMNDDFHKEEDVFENLDINRYLMFKSLVDTGFYLNPGLRFGCQFVAYPGDALRYHSHYLVNSYKWDQEIPVLFLIGGGRLGTAVKKTWLIGGSNDRNINMNGEKSKEELLLLPVRHFSIEWAGFG.

Residues tyrosine 206, histidine 214, and lysine 245 contribute to the active site.

This sequence belongs to the tRNA-intron endonuclease family. As to quaternary structure, heterotetramer composed of sen2, sen15, sen34 and sen54. Interacts directly with sen15.

The catalysed reaction is pretRNA = a 3'-half-tRNA molecule with a 5'-OH end + a 5'-half-tRNA molecule with a 2',3'-cyclic phosphate end + an intron with a 2',3'-cyclic phosphate and a 5'-hydroxyl terminus.. Functionally, constitutes one of the two catalytic subunit of the tRNA-splicing endonuclease complex, a complex responsible for identification and cleavage of the splice sites in pre-tRNA. It cleaves pre-tRNA at the 5'- and 3'-splice sites to release the intron. The products are an intron and two tRNA half-molecules bearing 2',3'-cyclic phosphate and 5'-OH termini. There are no conserved sequences at the splice sites, but the intron is invariably located at the same site in the gene, placing the splice sites an invariant distance from the constant structural features of the tRNA body. It probably carries the active site for 3'-splice site cleavage. The protein is Probable tRNA-splicing endonuclease subunit sen34 (sen34) of Schizosaccharomyces pombe (strain 972 / ATCC 24843) (Fission yeast).